A 233-amino-acid polypeptide reads, in one-letter code: Biosynthetic peptidoglycan transglycosylase (233 aa).

The helical transmembrane segment at 7–27 (VFTWLAKLVLGLFFASILSVV) threads the bilayer.

It belongs to the glycosyltransferase 51 family.

The protein localises to the cell inner membrane. It catalyses the reaction [GlcNAc-(1-&gt;4)-Mur2Ac(oyl-L-Ala-gamma-D-Glu-L-Lys-D-Ala-D-Ala)](n)-di-trans,octa-cis-undecaprenyl diphosphate + beta-D-GlcNAc-(1-&gt;4)-Mur2Ac(oyl-L-Ala-gamma-D-Glu-L-Lys-D-Ala-D-Ala)-di-trans,octa-cis-undecaprenyl diphosphate = [GlcNAc-(1-&gt;4)-Mur2Ac(oyl-L-Ala-gamma-D-Glu-L-Lys-D-Ala-D-Ala)](n+1)-di-trans,octa-cis-undecaprenyl diphosphate + di-trans,octa-cis-undecaprenyl diphosphate + H(+). It participates in cell wall biogenesis; peptidoglycan biosynthesis. In terms of biological role, peptidoglycan polymerase that catalyzes glycan chain elongation from lipid-linked precursors. The polypeptide is Biosynthetic peptidoglycan transglycosylase (Shewanella oneidensis (strain ATCC 700550 / JCM 31522 / CIP 106686 / LMG 19005 / NCIMB 14063 / MR-1)).